The sequence spans 358 residues: WD repeat-containing protein 53 (358 aa).

WD repeat units lie at residues 8-47 (GHSSSILCLNANKDGLVASGGEGGDLVAWGEDGTPLGHMQ), 92-131 (VNEEEINCLSLNETESLLASADDSGAIKILDLEKKKVTRS), 134-174 (RHSN…PVWI), 195-234 (LNPALAHSVSVASCGNIFSCGAEDGKVRIFRVMGVKCERE), and 239-278 (GHTLGVSQVCFLPESSLLLTGGNDGRIRLWDVSGKMEKLQ). The disordered stretch occupies residues 288 to 309 (KKAKRAACPTQGGNSRAPGAED).

The protein belongs to the WD repeat WDR53 family.

This is WD repeat-containing protein 53 (Wdr53) from Mus musculus (Mouse).